We begin with the raw amino-acid sequence, 176 residues long: Transmembrane protein 238 (176 aa).

A disordered region spans residues 1-21 (MAAASPVCGSQASAVGASSPP). Topologically, residues 1 to 36 (MAAASPVCGSQASAVGASSPPAPAPAPAAGLGRCRM) are cytoplasmic. A compositionally biased stretch (low complexity) spans 9–19 (GSQASAVGASS). A helical transmembrane segment spans residues 37 to 57 (ALLLAVALDVAGMAALLTGVF). The Extracellular segment spans residues 58–69 (AQLQVRGRDFGD). The helical transmembrane segment at 70–90 (LLIYSGALLVFLSLLGWILWY) threads the bilayer. At 91 to 176 (TGNIEISRQE…GSVAAGTGSE (86 aa)) the chain is on the cytoplasmic side. Positions 124 to 135 (SAPATASPRTTA) are enriched in low complexity. The disordered stretch occupies residues 124-156 (SAPATASPRTTAGLRSARRANRAPQPSSSGSRR). Ser175 is subject to Phosphoserine.

It is found in the membrane. The polypeptide is Transmembrane protein 238 (Tmem238) (Mus musculus (Mouse)).